The chain runs to 211 residues: Inactive ribonuclease-like protein 10 (211 aa).

The signal sequence occupies residues 1–24 (MKLTLVQIFFMMLLLLLGLGVGLG).

The protein belongs to the pancreatic ribonuclease family. The N-terminus is blocked. Glycosylated.

It is found in the secreted. In terms of biological role, secreted proximal epididymal protein required for post-testicular sperm maturation and male fertility. May be involved in sperm adhesion to the egg zona pellucida. Does not have ribonuclease activity. In Bos taurus (Bovine), this protein is Inactive ribonuclease-like protein 10 (RNASE10).